Here is a 59-residue protein sequence, read N- to C-terminus: Large ribosomal subunit protein bL32 (59 aa).

Residues 1–15 (MAVPKKKTSKSKRDM) are compositionally biased toward basic residues. Residues 1 to 26 (MAVPKKKTSKSKRDMRRATWNRKAAA) are disordered.

The protein belongs to the bacterial ribosomal protein bL32 family.

This chain is Large ribosomal subunit protein bL32, found in Cyanothece sp. (strain PCC 7425 / ATCC 29141).